The primary structure comprises 267 residues: Undecaprenyl-diphosphatase (267 aa).

7 helical membrane-spanning segments follow: residues 4-24 (LYAL…ISST), 41-61 (FWKS…IFVF), 69-89 (LDIW…GLFV), 96-116 (LFNG…FILI), 173-193 (AAEF…AYSI), 207-227 (IPLG…IKFF), and 239-259 (FGIY…SGIL).

Belongs to the UppP family.

The protein localises to the cell inner membrane. The catalysed reaction is di-trans,octa-cis-undecaprenyl diphosphate + H2O = di-trans,octa-cis-undecaprenyl phosphate + phosphate + H(+). Functionally, catalyzes the dephosphorylation of undecaprenyl diphosphate (UPP). Confers resistance to bacitracin. In Campylobacter jejuni subsp. jejuni serotype O:23/36 (strain 81-176), this protein is Undecaprenyl-diphosphatase.